Here is a 256-residue protein sequence, read N- to C-terminus: Alcohol dehydrogenase (256 aa).

Phe12 to Leu35 provides a ligand contact to NAD(+). Position 140 (Ser140) interacts with substrate. Tyr153 (proton acceptor) is an active-site residue.

It belongs to the short-chain dehydrogenases/reductases (SDR) family. Homodimer.

It carries out the reaction a primary alcohol + NAD(+) = an aldehyde + NADH + H(+). The enzyme catalyses a secondary alcohol + NAD(+) = a ketone + NADH + H(+). The chain is Alcohol dehydrogenase (Adh) from Zaprionus tuberculatus (Vinegar fly).